Here is a 159-residue protein sequence, read N- to C-terminus: Ribosomal RNA large subunit methyltransferase H (159 aa).

S-adenosyl-L-methionine is bound by residues leucine 76, glycine 108, and 127–132; that span reads FGKLTM.

It belongs to the RNA methyltransferase RlmH family. As to quaternary structure, homodimer.

Its subcellular location is the cytoplasm. It catalyses the reaction pseudouridine(1915) in 23S rRNA + S-adenosyl-L-methionine = N(3)-methylpseudouridine(1915) in 23S rRNA + S-adenosyl-L-homocysteine + H(+). Functionally, specifically methylates the pseudouridine at position 1915 (m3Psi1915) in 23S rRNA. This chain is Ribosomal RNA large subunit methyltransferase H, found in Lactobacillus delbrueckii subsp. bulgaricus (strain ATCC 11842 / DSM 20081 / BCRC 10696 / JCM 1002 / NBRC 13953 / NCIMB 11778 / NCTC 12712 / WDCM 00102 / Lb 14).